We begin with the raw amino-acid sequence, 241 residues long: Uridylate kinase (241 aa).

9–10 (GS) is a binding site for ATP. Residue Gly44 participates in UMP binding. Residues Gly45 and Arg49 each coordinate ATP. Residues Asp66 and 114 to 120 (IMPGQTT) each bind UMP. 3 residues coordinate ATP: Thr140, Tyr146, and Asp149.

This sequence belongs to the UMP kinase family. Homohexamer.

Its subcellular location is the cytoplasm. It catalyses the reaction UMP + ATP = UDP + ADP. Its pathway is pyrimidine metabolism; CTP biosynthesis via de novo pathway; UDP from UMP (UMPK route): step 1/1. With respect to regulation, inhibited by UTP. Functionally, catalyzes the reversible phosphorylation of UMP to UDP. The chain is Uridylate kinase from Haloquadratum walsbyi (strain DSM 16790 / HBSQ001).